The primary structure comprises 492 residues: MNDQTRQRLLNLEALVEAGFAPYPYRFPKTHSAEAILKAKRGAPPESEWPEEEVAVAGRLVALRRMGKVTFAHLLDETGRIQLYFQRDLTPKYELLKKLDVGDILGVRGHPFTTKTGEVTVKVLDWTPLVKSLHPLPDKWHGLRDKEVRYRQRYLDLIVNPEVREVFRRRSEIVRYIRRFFEAKGFLEVETPILQPTTGGAEARPFKTYHNALDHEFYLRISLELYLKRLLVGGYEKVFEIGRNFRNEGIDHNHNPEFTMLEAYWAYADYQDMAGLVEELLSGLVLHLFGSHEVPYQGRVLNFKPPFRRISFVEALKEKAGLPFDPLDLERLRLWADAHHPELSQVPNYKLLDKLFGIYVEPELQDPTFVFDFPLAISPLAKRHREKPGLVERWDLYAGGMELAPCYSELNDPLDQRERFLEQARRRKEGDEEAPEPDEDFLLALEYGMPPAAGLGLGIDRLAMLLTDQPSLRDVLLFPLLKPKKEAVEEGV.

Residues D395 and E402 each coordinate Mg(2+).

This sequence belongs to the class-II aminoacyl-tRNA synthetase family. Homodimer. The cofactor is Mg(2+).

Its subcellular location is the cytoplasm. It catalyses the reaction tRNA(Lys) + L-lysine + ATP = L-lysyl-tRNA(Lys) + AMP + diphosphate. This Thermus thermophilus (strain ATCC BAA-163 / DSM 7039 / HB27) protein is Lysine--tRNA ligase.